Here is a 349-residue protein sequence, read N- to C-terminus: N-acetyl-gamma-glutamyl-phosphate reductase (349 aa).

Cys149 is an active-site residue.

This sequence belongs to the NAGSA dehydrogenase family. Type 1 subfamily.

It is found in the cytoplasm. The catalysed reaction is N-acetyl-L-glutamate 5-semialdehyde + phosphate + NADP(+) = N-acetyl-L-glutamyl 5-phosphate + NADPH + H(+). It participates in amino-acid biosynthesis; L-arginine biosynthesis; N(2)-acetyl-L-ornithine from L-glutamate: step 3/4. In terms of biological role, catalyzes the NADPH-dependent reduction of N-acetyl-5-glutamyl phosphate to yield N-acetyl-L-glutamate 5-semialdehyde. The chain is N-acetyl-gamma-glutamyl-phosphate reductase from Acinetobacter baumannii (strain AB307-0294).